The chain runs to 438 residues: Adenosylhomocysteinase (438 aa).

Positions 61, 137, and 162 each coordinate substrate. 163–165 (TTT) lines the NAD(+) pocket. K192 and D196 together coordinate substrate. Residues N197, 226 to 231 (GYGDVG), E249, N284, 305 to 307 (IGH), and N352 each bind NAD(+).

Belongs to the adenosylhomocysteinase family. Requires NAD(+) as cofactor.

Its subcellular location is the cytoplasm. The catalysed reaction is S-adenosyl-L-homocysteine + H2O = L-homocysteine + adenosine. The protein operates within amino-acid biosynthesis; L-homocysteine biosynthesis; L-homocysteine from S-adenosyl-L-homocysteine: step 1/1. Its function is as follows. May play a key role in the regulation of the intracellular concentration of adenosylhomocysteine. The chain is Adenosylhomocysteinase from Flavobacterium psychrophilum (strain ATCC 49511 / DSM 21280 / CIP 103535 / JIP02/86).